A 98-amino-acid polypeptide reads, in one-letter code: Small ribosomal subunit protein bS20 (98 aa).

Basic residues predominate over residues 1–12; sequence MAPRKPSKKVGP. Residues 1–31 are disordered; that stretch reads MAPRKPSKKVGPQKRPSAEKRVITSKKKQLR.

It belongs to the bacterial ribosomal protein bS20 family.

Binds directly to 16S ribosomal RNA. The polypeptide is Small ribosomal subunit protein bS20 (Chlamydia trachomatis serovar A (strain ATCC VR-571B / DSM 19440 / HAR-13)).